Here is a 494-residue protein sequence, read N- to C-terminus: UPF0371 protein stu1377 (494 aa).

It belongs to the UPF0371 family.

This Streptococcus thermophilus (strain ATCC BAA-250 / LMG 18311) protein is UPF0371 protein stu1377.